We begin with the raw amino-acid sequence, 491 residues long: Serine/threonine-protein kinase 33 (491 aa).

Residues 51-89 form a disordered region; sequence FASQERKKERNTSRESSLKDLSIRTSNVERKPQAQWSRS. Residues 54 to 82 show a composition bias toward basic and acidic residues; sequence QERKKERNTSRESSLKDLSIRTSNVERKP. Residues 111-377 form the Protein kinase domain; that stretch reads YTFGRILGQG…AKELLDNQWL (267 aa). Residues 117 to 125 and Lys140 contribute to the ATP site; that span reads LGQGSFGMV. Catalysis depends on Asp233, which acts as the Proton acceptor. The disordered stretch occupies residues 398–491; the sequence is KNNPESDEET…TTLFRGKKRL (94 aa). Acidic residues predominate over residues 402–414; that stretch reads ESDEETNTDEETE. Ser403 carries the post-translational modification Phosphoserine. Residues 415-431 are compositionally biased toward polar residues; sequence QSAVYSPSANTAKQPTN. Low complexity predominate over residues 445-457; sequence SSNSSSSKLLSAE. The span at 475–484 shows a compositional bias: polar residues; that stretch reads AKTTLKSTTL.

The protein belongs to the protein kinase superfamily. CAMK Ser/Thr protein kinase family. CaMK subfamily. In terms of assembly, homodimer. Post-translationally, autophosphorylated. As to expression, highly expressed in testis, particularly in cells from the spermatogenic epithelia. Present in meiotic and post meiotic sperm cells. Significant expression is detected in lung epithelia, alveolar macrophages, horizontal cells in the retina and in embryonic organs such as heart, brain and spinal cord. Also expressed in pituitary gland, kidney, pancreas, trachea and thyroid gland.

It localises to the cytoplasm. It is found in the cytoskeleton. Its subcellular location is the perinuclear region. It catalyses the reaction L-seryl-[protein] + ATP = O-phospho-L-seryl-[protein] + ADP + H(+). The enzyme catalyses L-threonyl-[protein] + ATP = O-phospho-L-threonyl-[protein] + ADP + H(+). Specifically inhibited by CDD-2807 ((3-([1,1'-Biphenyl]-2-ylethynyl)-1H-indazol-5-yl)(2,6-diazaspiro[3.5]nonan-2-yl)methanone). CDD-2807 is a potential male contraceptive drug: it is not toxic, efficiently crosses the blood-testis barrier and induces a reversible contraceptive effect in male mice. Its function is as follows. Serine/threonine protein kinase required for spermatid differentiation and male fertility. Promotes sperm flagella assembly during spermatogenesis by mediating phosphorylation of fibrous sheath proteins AKAP3 and AKAP4. Also phosphorylates vimentin/VIM, thereby regulating the dynamic behavior of the intermediate filament cytoskeleton. The protein is Serine/threonine-protein kinase 33 of Mus musculus (Mouse).